The sequence spans 119 residues: FAD-linked sulfhydryl oxidase (119 aa).

In terms of domain architecture, ERV/ALR sulfhydryl oxidase spans 1 to 97 (MLHWGPKFWR…ISWSEYKNIY (97 aa)). Cys44 and Cys47 are joined by a disulfide.

The protein belongs to the asfivirus B119L family. In terms of assembly, interacts with A151R. The cofactor is FAD.

The protein resides in the host cytoplasm. It is found in the virion. The catalysed reaction is 2 R'C(R)SH + O2 = R'C(R)S-S(R)CR' + H2O2. FAD-dependent sulfhydryl oxidase that catalyzes the formation of disulfide bonds in viral proteins produced in the cell cytoplasm. This is FAD-linked sulfhydryl oxidase from Ornithodoros (relapsing fever ticks).